Here is a 521-residue protein sequence, read N- to C-terminus: Cytochrome P450 monooxygenase bet2 (521 aa).

Residues 23–43 traverse the membrane as a helical segment; it reads SNWRFALFVAATLLTSYIVIV. The N-linked (GlcNAc...) asparagine glycan is linked to Asn-188. Cys-461 contributes to the heme binding site.

The protein belongs to the cytochrome P450 family. It depends on heme as a cofactor.

Its subcellular location is the membrane. It carries out the reaction dehydroprobetaenone I + NADPH + O2 + H(+) = epoxybetaenone + NADP(+) + H2O. It catalyses the reaction dehydroprobetaenone I + 3 NADPH + 3 O2 + 3 H(+) = betaenone C + 3 NADP(+) + 3 H2O. It participates in mycotoxin biosynthesis. Functionally, cytochrome P450 monooxygenase; part of the gene cluster that mediates the biosynthesis of betaenones, phytotoxic polyketides involved in leaf spot disease in sugar beets. The first step of the pathway is the synthesis of dehydroprobetaenone I by the polyketide synthase bet1 and the enoyl reductase bet3 via condensation of one acetyl-CoA starter unit with 7 malonyl-CoA units and 5 methylations. The C-terminal reductase (R) domain of bet1 catalyzes the reductive release of the polyketide chain. Because bet1 lacks a designated enoylreductase (ER) domain, the required activity is provided the enoyl reductase bet3. The short-chain dehydrogenase/reductase bet4 then catalyzes reduction of dehydroprobetaenone I to probetaenone I. The cytochrome P450 monooxygenase bet2 catalyzes successive epoxidation, oxidation (resulting from epoxide opening) and hydroxylation to install a tertiary alcohol in the decaline ring to yield betaenone C from dehydroprobetaenone I and betaenone B from probetaenone I. The FAD-linked oxidoreductase (orf1) is probably responsible for the conversion of betaenone C to betaenone A via an intramolecular aldol reaction between C-1 and C-17 to form the bridged tricyclic system in betaenone A. This chain is Cytochrome P450 monooxygenase bet2, found in Neocamarosporium betae (Beet black rot fungus).